Reading from the N-terminus, the 196-residue chain is Segregation and condensation protein B (196 aa).

The protein belongs to the ScpB family. In terms of assembly, homodimer. Homodimerization may be required to stabilize the binding of ScpA to the Smc head domains. Component of a cohesin-like complex composed of ScpA, ScpB and the Smc homodimer, in which ScpA and ScpB bind to the head domain of Smc. The presence of the three proteins is required for the association of the complex with DNA.

The protein localises to the cytoplasm. Participates in chromosomal partition during cell division. May act via the formation of a condensin-like complex containing Smc and ScpA that pull DNA away from mid-cell into both cell halves. In Pediococcus pentosaceus (strain ATCC 25745 / CCUG 21536 / LMG 10740 / 183-1w), this protein is Segregation and condensation protein B.